Here is a 143-residue protein sequence, read N- to C-terminus: Ribosome maturation factor RimP (143 aa).

This sequence belongs to the RimP family.

The protein localises to the cytoplasm. Functionally, required for maturation of 30S ribosomal subunits. In Neisseria meningitidis serogroup C (strain 053442), this protein is Ribosome maturation factor RimP.